The chain runs to 283 residues: Acetylglutamate kinase (283 aa).

Residues Gly63–Gly64, Arg85, and Asn178 contribute to the substrate site.

The protein belongs to the acetylglutamate kinase family. ArgB subfamily.

It localises to the cytoplasm. It catalyses the reaction N-acetyl-L-glutamate + ATP = N-acetyl-L-glutamyl 5-phosphate + ADP. It participates in amino-acid biosynthesis; L-arginine biosynthesis; N(2)-acetyl-L-ornithine from L-glutamate: step 2/4. Its function is as follows. Catalyzes the ATP-dependent phosphorylation of N-acetyl-L-glutamate. The sequence is that of Acetylglutamate kinase from Prochlorococcus marinus (strain AS9601).